Here is a 743-residue protein sequence, read N- to C-terminus: Catalase-peroxidase (743 aa).

A compositionally biased stretch (polar residues) spans 1–15 (MSSDSRPPQPDTSTQ). Residues 1 to 40 (MSSDSRPPQPDTSTQSNSESESPAISSPTPQDHAPMTNRD) form a disordered region. Over residues 16 to 28 (SNSESESPAISSP) the composition is skewed to low complexity. The segment at residues 110-233 (WHAAGTYRIQ…YGATTMGLIY (124 aa)) is a cross-link (tryptophyl-tyrosyl-methioninium (Trp-Tyr) (with M-259)). Residue histidine 111 is the Proton acceptor of the active site. A cross-link (tryptophyl-tyrosyl-methioninium (Tyr-Met) (with W-110)) is located at residues 233 to 259 (YVNPEGPEGKPDPVAAAHDIRETFARM). Histidine 274 is a binding site for heme b. Residues 490 to 511 (DKRGGANGGRLRLEPQKSWESN) are disordered.

This sequence belongs to the peroxidase family. Peroxidase/catalase subfamily. Homodimer or homotetramer. It depends on heme b as a cofactor. In terms of processing, formation of the three residue Trp-Tyr-Met cross-link is important for the catalase, but not the peroxidase activity of the enzyme.

The catalysed reaction is H2O2 + AH2 = A + 2 H2O. It carries out the reaction 2 H2O2 = O2 + 2 H2O. Bifunctional enzyme with both catalase and broad-spectrum peroxidase activity. The polypeptide is Catalase-peroxidase (Mycobacterium marinum (strain ATCC BAA-535 / M)).